We begin with the raw amino-acid sequence, 212 residues long: Thymidine kinase (212 aa).

ATP contacts are provided by residues 11-18, 43-45, and 86-89; these read SPMNAGKT, DTR, and DEAQ. Residue Glu87 is the Proton acceptor of the active site. Phe119 contributes to the substrate binding site. Cys144, Cys147, Cys183, and Cys186 together coordinate Zn(2+).

This sequence belongs to the thymidine kinase family.

It carries out the reaction thymidine + ATP = dTMP + ADP + H(+). The chain is Thymidine kinase (TK) from Encephalitozoon cuniculi (strain GB-M1) (Microsporidian parasite).